The sequence spans 359 residues: Glycerol-3-phosphate dehydrogenase [NAD(P)+] (359 aa).

NADPH contacts are provided by Thr11, Trp12, Arg32, and Lys107. Sn-glycerol 3-phosphate is bound by residues Lys107 and Gly138. Ala142 serves as a coordination point for NADPH. Sn-glycerol 3-phosphate contacts are provided by Lys193, Asp246, Ser256, Arg257, and Asn258. The active-site Proton acceptor is Lys193. Arg257 serves as a coordination point for NADPH. Positions 281 and 283 each coordinate NADPH.

The protein belongs to the NAD-dependent glycerol-3-phosphate dehydrogenase family.

Its subcellular location is the cytoplasm. The catalysed reaction is sn-glycerol 3-phosphate + NAD(+) = dihydroxyacetone phosphate + NADH + H(+). It carries out the reaction sn-glycerol 3-phosphate + NADP(+) = dihydroxyacetone phosphate + NADPH + H(+). It functions in the pathway membrane lipid metabolism; glycerophospholipid metabolism. Catalyzes the reduction of the glycolytic intermediate dihydroxyacetone phosphate (DHAP) to sn-glycerol 3-phosphate (G3P), the key precursor for phospholipid synthesis. In Dehalococcoides mccartyi (strain ATCC BAA-2266 / KCTC 15142 / 195) (Dehalococcoides ethenogenes (strain 195)), this protein is Glycerol-3-phosphate dehydrogenase [NAD(P)+].